We begin with the raw amino-acid sequence, 474 residues long: tRNA-2-methylthio-N(6)-dimethylallyladenosine synthase (474 aa).

The region spanning 3-120 (KKLHIKTWGC…LPEMIDQVQR (118 aa)) is the MTTase N-terminal domain. Positions 12, 49, 83, 157, 161, and 164 each coordinate [4Fe-4S] cluster. In terms of domain architecture, Radical SAM core spans 143-375 (RADGPTAFVS…QDRITQQAMR (233 aa)). In terms of domain architecture, TRAM spans 378 to 441 (RQMLGTVQRI…TNSLRGIFIR (64 aa)).

This sequence belongs to the methylthiotransferase family. MiaB subfamily. As to quaternary structure, monomer. The cofactor is [4Fe-4S] cluster.

It is found in the cytoplasm. The enzyme catalyses N(6)-dimethylallyladenosine(37) in tRNA + (sulfur carrier)-SH + AH2 + 2 S-adenosyl-L-methionine = 2-methylsulfanyl-N(6)-dimethylallyladenosine(37) in tRNA + (sulfur carrier)-H + 5'-deoxyadenosine + L-methionine + A + S-adenosyl-L-homocysteine + 2 H(+). Functionally, catalyzes the methylthiolation of N6-(dimethylallyl)adenosine (i(6)A), leading to the formation of 2-methylthio-N6-(dimethylallyl)adenosine (ms(2)i(6)A) at position 37 in tRNAs that read codons beginning with uridine. The chain is tRNA-2-methylthio-N(6)-dimethylallyladenosine synthase from Shewanella denitrificans (strain OS217 / ATCC BAA-1090 / DSM 15013).